We begin with the raw amino-acid sequence, 334 residues long: 4-hydroxy-3-methylbut-2-enyl diphosphate reductase (334 aa).

Residue Cys-19 participates in [4Fe-4S] cluster binding. Residues His-48 and His-84 each coordinate (2E)-4-hydroxy-3-methylbut-2-enyl diphosphate. Positions 48 and 84 each coordinate dimethylallyl diphosphate. Residues His-48 and His-84 each contribute to the isopentenyl diphosphate site. Cys-106 provides a ligand contact to [4Fe-4S] cluster. (2E)-4-hydroxy-3-methylbut-2-enyl diphosphate is bound at residue His-134. Position 134 (His-134) interacts with dimethylallyl diphosphate. Position 134 (His-134) interacts with isopentenyl diphosphate. The active-site Proton donor is Glu-136. Thr-175 contributes to the (2E)-4-hydroxy-3-methylbut-2-enyl diphosphate binding site. Cys-205 contributes to the [4Fe-4S] cluster binding site. (2E)-4-hydroxy-3-methylbut-2-enyl diphosphate-binding residues include Ser-233, Ser-234, Asn-235, and Ser-278. 4 residues coordinate dimethylallyl diphosphate: Ser-233, Ser-234, Asn-235, and Ser-278. Positions 233, 234, 235, and 278 each coordinate isopentenyl diphosphate.

This sequence belongs to the IspH family. Requires [4Fe-4S] cluster as cofactor.

The catalysed reaction is isopentenyl diphosphate + 2 oxidized [2Fe-2S]-[ferredoxin] + H2O = (2E)-4-hydroxy-3-methylbut-2-enyl diphosphate + 2 reduced [2Fe-2S]-[ferredoxin] + 2 H(+). It catalyses the reaction dimethylallyl diphosphate + 2 oxidized [2Fe-2S]-[ferredoxin] + H2O = (2E)-4-hydroxy-3-methylbut-2-enyl diphosphate + 2 reduced [2Fe-2S]-[ferredoxin] + 2 H(+). The protein operates within isoprenoid biosynthesis; dimethylallyl diphosphate biosynthesis; dimethylallyl diphosphate from (2E)-4-hydroxy-3-methylbutenyl diphosphate: step 1/1. It participates in isoprenoid biosynthesis; isopentenyl diphosphate biosynthesis via DXP pathway; isopentenyl diphosphate from 1-deoxy-D-xylulose 5-phosphate: step 6/6. In terms of biological role, catalyzes the conversion of 1-hydroxy-2-methyl-2-(E)-butenyl 4-diphosphate (HMBPP) into a mixture of isopentenyl diphosphate (IPP) and dimethylallyl diphosphate (DMAPP). Acts in the terminal step of the DOXP/MEP pathway for isoprenoid precursor biosynthesis. The polypeptide is 4-hydroxy-3-methylbut-2-enyl diphosphate reductase (Chelativorans sp. (strain BNC1)).